Reading from the N-terminus, the 398-residue chain is Phospholipase C (398 aa).

The N-terminal stretch at 1–28 (MKRKIYKLLICATIATSLWAVRTTKVYA) is a signal peptide. Zn(2+) contacts are provided by Trp29, His39, Asp84, His96, His154, Asp158, His164, His176, and Glu180. Positions 29 to 278 (WDGKADGTGT…HDVSDGKDSS (250 aa)) constitute a Zn-dependent PLC domain. Residues 275–283 (KDSSANKNV) are linker. One can recognise a PLAT domain in the interval 284-398 (NELVAYITTG…ISGNSTYNIK (115 aa)). 9 residues coordinate Ca(2+): Gly299, Thr300, Asp301, Asp321, Asn322, Gly324, Asn325, Asp326, and Asp365.

Ca(2+) is required as a cofactor. It depends on Zn(2+) as a cofactor.

Its subcellular location is the secreted. The enzyme catalyses a 1,2-diacyl-sn-glycero-3-phosphocholine + H2O = phosphocholine + a 1,2-diacyl-sn-glycerol + H(+). Functionally, bacterial hemolysins are exotoxins that attack blood cell membranes and cause cell rupture. Constitutes an essential virulence factor in gas gangrene. Binds to eukaryotic membranes where it hydrolyzes both phosphatidylcholine and sphingomyelin, causing cell rupture. The diacylglycerol produced can activate both the arachidonic acid pathway, leading to modulation of the inflammatory response cascade and thrombosis, and protein kinase C, leading to activation of eukaryotic phospholipases and further membrane damage. This Clostridium perfringens protein is Phospholipase C (plc).